The chain runs to 170 residues: Cathelicidin antimicrobial peptide (170 aa).

Positions 1-30 (MKTQRDGPSLGRWSLVLLLLGLTMPLAVIA) are cleaved as a signal peptide. Positions 31 to 131 (RVLSYQEAVL…DISCDKDKRK (101 aa)) are cleaved as a propeptide — cathelin-like domain (CLD). Cystine bridges form between cysteine 86–cysteine 97 and cysteine 108–cysteine 125. The active core stretch occupies residues 150 to 162 (LKNIGQRIKDFFG).

It belongs to the cathelicidin family. As to quaternary structure, monomer, homodimer or homotrimer (in vitro). Oligomerizes as tetra- or hexamer in solution (in vitro). Post-translationally, proteolytically cleaved by proteinase PRTN3 into antibacterial peptide LL-37. Proteolytically cleaved by cathepsin CTSG and neutrophil elastase ELANE. In terms of processing, resistant to proteolytic degradation in solution, and when bound to both zwitterionic (mimicking mammalian membranes) and negatively charged membranes (mimicking bacterial membranes). After secretion onto the skin surface, the CAMP gene product is processed by a serine protease-dependent mechanism into multiple novel antimicrobial peptides distinct from and shorter than cathelicidin LL-37. These peptides show enhanced antimicrobial action, acquiring the ability to kill skin pathogens such as S.aureus, E.coli and C.albicans. These peptides have lost the ability to stimulate CXCL8/IL8 release from keratinocytes. The peptides act synergistically, killing bacteria at lower concentrations when present together, and maintain activity at increased salt condition.

Its subcellular location is the secreted. It localises to the vesicle. Functionally, antimicrobial protein that is an integral component of the innate immune system. Binds to bacterial lipopolysaccharides (LPS). Acts via neutrophil N-formyl peptide receptors to enhance the release of CXCL2. Postsecretory processing generates multiple cathelicidin antimicrobial peptides with various lengths which act as a topical antimicrobial defense in sweat on skin. The unprocessed precursor form, cathelicidin antimicrobial peptide, inhibits the growth of Gram-negative E.coli and E.aerogenes with efficiencies comparable to that of the mature peptide LL-37 (in vitro). In terms of biological role, antimicrobial peptide that is an integral component of the innate immune system. Binds to bacterial lipopolysaccharides (LPS). Causes membrane permeabilization by forming transmembrane pores (in vitro). Causes lysis of E.coli. Exhibits antimicrobial activity against Gram-negative bacteria such as P.aeruginosa, S.typhimurium, E.aerogenes, E.coli and P.syringae, Gram-positive bacteria such as L.monocytogenes, S.epidermidis, S.pyogenes and S.aureus, as well as vancomycin-resistant enterococci (in vitro). Exhibits antimicrobial activity against methicillin-resistant S.aureus, P.mirabilis, and C.albicans in low-salt media, but not in media containing 100 mM NaCl (in vitro). Forms chiral supramolecular assemblies with quinolone signal (PQS) molecules of P.aeruginosa, which may lead to interference of bacterial quorum signaling and perturbance of bacterial biofilm formation. May form supramolecular fiber-like assemblies on bacterial membranes. Induces cytokine and chemokine producation as well as TNF/TNFA and CSF2/GMCSF production in normal human keratinocytes. Exhibits hemolytic activity against red blood cells. Exhibits antimicrobial activity against E.coli and B.megaterium (in vitro). This is Cathelicidin antimicrobial peptide from Ateles fusciceps robustus (Colombian black-faced spider monkey).